The primary structure comprises 710 residues: MQAKKPGGSSGGGRSGELQGDEAQRNKKKKKKVSCFSNIKIFLVSECALMLAQGTVGAYLVSVLTTLERRFNLQSADVGVIASSFEIGNLALILFVSYFGARGHRPRLIGCGGIVMALGALLSALPEFLTHQYKYEAGEIRWGAEGRDVCAANGSGGDQGPDPDLICRSRTATNMMYLLLIGAQVLLGIGATPVQPLGVSYIDDHVRRKDSSLYIGILFTMLVFGPACGFILGSFCTKIYVDAVFIDTSNLDITPDDPRWIGAWWGGFLLCGALLFFSSVLMFGFPQSLPPHSDPALESEQAMLPEREYERPKPSNGVLRHPLEPDSSASCFQQLRVIPKVTKHLLSNPVFTCIILAACMEIAVVAGFAAFLGKYLEQQFNLTTSSANQLLGMTAIPCACLGIFLGGLLVKKLSLSALGAIRMAMLVNLVSTACYVSFLFLGCDTGPVAGVTVPYGNSSTPGSALDPYSSCNKNCECQTDSFTPVCGADGITYLSACFAGCNSTNLTGCACLMTIPPENATVIPGKCPSPGCQEAFLTFLCVMCVCSMIGAMAQTPSVIILIRTVSPELKSYALGVLFLLLRLLGFIPPPLIFGAGIDSTCLFWSTFCGEQGACALYDNVAYRYLYVSIAIALKSFAFLLYTTTWQCLRKNYKRYIKNHEGGLSTSEFFASTLTLDNLGRDPVPANQTHRTKFIYNLEDHEWCENMESVL.

Met-1 is modified (N-acetylmethionine). A disordered region spans residues 1–25; that stretch reads MQAKKPGGSSGGGRSGELQGDEAQR. The Cytoplasmic segment spans residues 1–40; that stretch reads MQAKKPGGSSGGGRSGELQGDEAQRNKKKKKKVSCFSNIK. Residues 41-60 traverse the membrane as a helical segment; sequence IFLVSECALMLAQGTVGAYL. At 61–79 the chain is on the extracellular side; the sequence is VSVLTTLERRFNLQSADVG. A helical membrane pass occupies residues 80–100; the sequence is VIASSFEIGNLALILFVSYFG. Residues 101 to 106 lie on the Cytoplasmic side of the membrane; it reads ARGHRP. A helical membrane pass occupies residues 107-131; sequence RLIGCGGIVMALGALLSALPEFLTH. Over 132 to 174 the chain is Extracellular; that stretch reads QYKYEAGEIRWGAEGRDVCAANGSGGDQGPDPDLICRSRTATN. N-linked (GlcNAc...) asparagine glycosylation occurs at Asn-153. The chain crosses the membrane as a helical span at residues 175 to 203; sequence MMYLLLIGAQVLLGIGATPVQPLGVSYID. At 204 to 222 the chain is on the cytoplasmic side; that stretch reads DHVRRKDSSLYIGILFTML. A helical membrane pass occupies residues 223–243; sequence VFGPACGFILGSFCTKIYVDA. Residues 244–261 are Extracellular-facing; sequence VFIDTSNLDITPDDPRWI. The helical transmembrane segment at 262–286 threads the bilayer; the sequence is GAWWGGFLLCGALLFFSSVLMFGFP. Residues 287–344 are Cytoplasmic-facing; the sequence is QSLPPHSDPALESEQAMLPEREYERPKPSNGVLRHPLEPDSSASCFQQLRVIPKVTKH. A helical membrane pass occupies residues 345–366; that stretch reads LLSNPVFTCIILAACMEIAVVA. The Extracellular portion of the chain corresponds to 367-386; that stretch reads GFAAFLGKYLEQQFNLTTSS. N-linked (GlcNAc...) asparagine glycosylation occurs at Asn-381. A helical membrane pass occupies residues 387-410; sequence ANQLLGMTAIPCACLGIFLGGLLV. Residues 411–414 are Cytoplasmic-facing; it reads KKLS. A helical transmembrane segment spans residues 415–438; it reads LSALGAIRMAMLVNLVSTACYVSF. Topologically, residues 439–539 are extracellular; that stretch reads LFLGCDTGPV…PGCQEAFLTF (101 aa). The N-linked (GlcNAc...) asparagine glycan is linked to Asn-457. The Kazal-like domain maps to 465-513; that stretch reads LDPYSSCNKNCECQTDSFTPVCGADGITYLSACFAGCNSTNLTGCACLM. Intrachain disulfides connect Cys-471–Cys-501, Cys-477–Cys-497, and Cys-486–Cys-511. N-linked (GlcNAc...) asparagine glycans are attached at residues Asn-502, Asn-505, and Asn-519. The helical transmembrane segment at 540-562 threads the bilayer; that stretch reads LCVMCVCSMIGAMAQTPSVIILI. At 563–571 the chain is on the cytoplasmic side; the sequence is RTVSPELKS. The chain crosses the membrane as a helical span at residues 572–597; sequence YALGVLFLLLRLLGFIPPPLIFGAGI. Residues 598–630 are Extracellular-facing; that stretch reads DSTCLFWSTFCGEQGACALYDNVAYRYLYVSIA. Residues 631-648 form a helical membrane-spanning segment; the sequence is IALKSFAFLLYTTTWQCL. Topologically, residues 649-705 are cytoplasmic; the sequence is RKNYKRYIKNHEGGLSTSEFFASTLTLDNLGRDPVPANQTHRTKFIYNLEDHEWCEN.

Belongs to the organo anion transporter (TC 2.A.60) family.

Its subcellular location is the basolateral cell membrane. The protein resides in the apical cell membrane. The protein localises to the basal cell membrane. The enzyme catalyses L-thyroxine(out) = L-thyroxine(in). It catalyses the reaction prostaglandin E1(out) = prostaglandin E1(in). It carries out the reaction prostaglandin E2(out) = prostaglandin E2(in). The catalysed reaction is prostaglandin F2alpha(out) = prostaglandin F2alpha(in). The enzyme catalyses (5Z,8Z,11Z,14Z)-eicosatetraenoate(out) = (5Z,8Z,11Z,14Z)-eicosatetraenoate(in). It catalyses the reaction taurocholate(out) = taurocholate(in). It carries out the reaction glycocholate(out) = glycocholate(in). The catalysed reaction is estrone 3-sulfate(out) = estrone 3-sulfate(in). The enzyme catalyses argipressin(out) = argipressin(in). Its function is as follows. Putative organic anion antiporter with apparent broad substrate specificity. Recognizes various substrates including thyroid hormone L-thyroxine, prostanoids such as prostaglandin E1 and E2, bile acids such as taurocholate, glycolate and glycochenodeoxycholate and peptide hormones such as L-arginine vasopressin, likely operating in a tissue-specific manner. The transport mechanism, its electrogenicity and potential tissue-specific counterions remain to be elucidated. In Bos taurus (Bovine), this protein is Solute carrier organic anion transporter family member 3A1 (SLCO3A1).